Reading from the N-terminus, the 1556-residue chain is Ferredoxin-dependent glutamate synthase 2 (1556 aa).

Cys37 functions as the For GATase activity in the catalytic mechanism. Residues 37-431 (CGVGFIANLR…PGQMIAVDLA (395 aa)) enclose the Glutamine amidotransferase type-2 domain. The [3Fe-4S] cluster site is built by Cys1173, Cys1179, and Cys1184. Positions 1533 to 1556 (PSEKDSPEANGDVSLTGEKTLTSV) are disordered.

Belongs to the glutamate synthase family. [3Fe-4S] cluster serves as cofactor. FAD is required as a cofactor. The cofactor is FMN.

It catalyses the reaction 2 oxidized [2Fe-2S]-[ferredoxin] + 2 L-glutamate = L-glutamine + 2 reduced [2Fe-2S]-[ferredoxin] + 2-oxoglutarate + 2 H(+). It participates in amino-acid biosynthesis; L-glutamate biosynthesis via GLT pathway; L-glutamate from 2-oxoglutarate and L-glutamine (ferredoxin route): step 1/1. It functions in the pathway energy metabolism; nitrogen metabolism. The chain is Ferredoxin-dependent glutamate synthase 2 (gltS) from Synechocystis sp. (strain ATCC 27184 / PCC 6803 / Kazusa).